Here is a 401-residue protein sequence, read N- to C-terminus: Putative TRAP transporter large permease protein HI_0050 (401 aa).

11 helical membrane passes run 31-51 (FPLM…HGGI), 70-90 (LGYV…SAVA), 115-135 (GLIC…PMII), 144-164 (ITKL…GLWV), 193-213 (AFWP…GIFT), 217-237 (AGVV…GLTF), 253-273 (MVMF…VAQI), 290-310 (ILMF…DLIP), 330-350 (IAYF…TPPV), 353-373 (VLYV…KGIA), and 375-395 (FLFV…IVIV).

Belongs to the TRAP transporter large permease family.

It is found in the cell inner membrane. This is Putative TRAP transporter large permease protein HI_0050 from Haemophilus influenzae (strain ATCC 51907 / DSM 11121 / KW20 / Rd).